The chain runs to 307 residues: HPr kinase/phosphorylase (307 aa).

Active-site residues include histidine 136 and lysine 157. 151–158 (GESGIGKS) contacts ATP. Serine 158 is a Mg(2+) binding site. Aspartate 175 functions as the Proton acceptor; for phosphorylation activity. Proton donor; for dephosphorylation activity in the catalytic mechanism. The interval 198–207 (LEVRGMGIID) is important for the catalytic mechanism of both phosphorylation and dephosphorylation. Glutamate 199 is a Mg(2+) binding site. Residue arginine 240 is part of the active site. The tract at residues 261–266 (PIRPGR) is important for the catalytic mechanism of dephosphorylation.

The protein belongs to the HPrK/P family. As to quaternary structure, homohexamer. Mg(2+) serves as cofactor.

The enzyme catalyses [HPr protein]-L-serine + ATP = [HPr protein]-O-phospho-L-serine + ADP + H(+). It carries out the reaction [HPr protein]-O-phospho-L-serine + phosphate + H(+) = [HPr protein]-L-serine + diphosphate. Functionally, catalyzes the ATP- as well as the pyrophosphate-dependent phosphorylation of a specific serine residue in HPr, a phosphocarrier protein of the phosphoenolpyruvate-dependent sugar phosphotransferase system (PTS). HprK/P also catalyzes the pyrophosphate-producing, inorganic phosphate-dependent dephosphorylation (phosphorolysis) of seryl-phosphorylated HPr (P-Ser-HPr). The two antagonistic activities of HprK/P are regulated by several intracellular metabolites, which change their concentration in response to the absence or presence of rapidly metabolisable carbon sources (glucose, fructose, etc.) in the growth medium. Therefore, by controlling the phosphorylation state of HPr, HPrK/P is a sensor enzyme that plays a major role in the regulation of carbon metabolism and sugar transport: it mediates carbon catabolite repression (CCR), and regulates PTS-catalyzed carbohydrate uptake and inducer exclusion. The chain is HPr kinase/phosphorylase from Clostridium perfringens (strain ATCC 13124 / DSM 756 / JCM 1290 / NCIMB 6125 / NCTC 8237 / Type A).